Here is a 260-residue protein sequence, read N- to C-terminus: Isopentenyl phosphate kinase (260 aa).

6-10 (KLGGS) lines the ATP pocket. Glycine 55 lines the substrate pocket. ATP is bound at residue glycine 56. Substrate-binding residues include histidine 60 and glycine 159. Positions 180, 217, and 221 each coordinate ATP.

The protein belongs to the isopentenyl phosphate kinase family. In terms of assembly, homodimer.

It carries out the reaction isopentenyl phosphate + ATP = isopentenyl diphosphate + ADP. Catalyzes the formation of isopentenyl diphosphate (IPP), the building block of all isoprenoids. Has no activity with farnesyl phosphate. This chain is Isopentenyl phosphate kinase, found in Methanocaldococcus jannaschii (strain ATCC 43067 / DSM 2661 / JAL-1 / JCM 10045 / NBRC 100440) (Methanococcus jannaschii).